Here is a 201-residue protein sequence, read N- to C-terminus: 3-isopropylmalate dehydratase small subunit (201 aa).

Belongs to the LeuD family. LeuD type 1 subfamily. Heterodimer of LeuC and LeuD.

It catalyses the reaction (2R,3S)-3-isopropylmalate = (2S)-2-isopropylmalate. The protein operates within amino-acid biosynthesis; L-leucine biosynthesis; L-leucine from 3-methyl-2-oxobutanoate: step 2/4. In terms of biological role, catalyzes the isomerization between 2-isopropylmalate and 3-isopropylmalate, via the formation of 2-isopropylmaleate. In Shewanella sp. (strain MR-4), this protein is 3-isopropylmalate dehydratase small subunit.